The chain runs to 247 residues: Zinc finger protein YPR015C (247 aa).

2 consecutive C2H2-type zinc fingers follow at residues 185–207 (KQCP…YLIH) and 213–237 (FKCT…LRTH).

This chain is Zinc finger protein YPR015C, found in Saccharomyces cerevisiae (strain ATCC 204508 / S288c) (Baker's yeast).